The following is an 805-amino-acid chain: MQINENKGFPTEIPIIVEDELFLYPFMITPLFLSDEENLKALELAIQGETPILVVPTKPQQDGARDFDGIYDAGVIGTIMRRVPLPDGRVKVLFQGIDKGKILKQSGINPLRGIVDMLHVKRPSQVKTDALIVVLREKVRELSQFNHFFPPDLLKTIEESAEAVRVCDLVSSALRLKKQIAYSFFVEENLEQRLLKLIDYVIEEIEANKLQKEIKNKVHSKIDKTNKEYFLKEQLKQIQAELGADTSREEELEEYRKKLDAKKKFMAEDAYKEIKKQIDKLSRMHPDSADANTLQSYLDWVLEIPFENVAKKKSSIAEVSKHLNADHYSLEKPKERIEEYFALRELLELRGVGEKVNNGAILCFAGPPGVGKTSLANSIAKALKRELVRIALGGLEDVNELRGHRRTYIGAMPGRIVQGLIEAKQMNPVVVLDEIDKVGRSYRGDPTAVLLEILDPEQNNKFRDYYLNFNIDLSKIIFIATANDVSMIPAALRDRMEFIELSSYTPQEKFEIAKKYLLPQELKKHGLKPSDVSISKEALELIISDYTRESGVRNLRRRIADILRKVAKNILTKKNEGKISVTAKNLKEFLEKKVYEIEPADKKDQIGLVNGLAWTSVGGDVLRIEAIRIQGKGSMQITGQLGDVMKESAQIAFSVVKVLIDNKKLKVPMPIVPKFDDDKHKLEASDVYRRYDLHLHVPEGAVPKDGPSAGITMATAIASILTDTKVKHDIAMTGEITLTGRVLPIGGLKEKLIAAHKAGIKTALIPRKNYDRDLVDIPAEVKADMKIIAVDTIDDVLKNALVAKK.

In terms of domain architecture, Lon N-terminal spans 13 to 205; it reads IPIIVEDELF…KLIDYVIEEI (193 aa). 366–373 contacts ATP; sequence GPPGVGKT. The 201-residue stretch at 603 to 803 folds into the Lon proteolytic domain; sequence KDQIGLVNGL…DDVLKNALVA (201 aa). Residues serine 708 and lysine 751 contribute to the active site.

The protein belongs to the peptidase S16 family. As to quaternary structure, homohexamer. Organized in a ring with a central cavity.

It localises to the cytoplasm. The catalysed reaction is Hydrolysis of proteins in presence of ATP.. In terms of biological role, ATP-dependent serine protease that mediates the selective degradation of mutant and abnormal proteins as well as certain short-lived regulatory proteins. Required for cellular homeostasis and for survival from DNA damage and developmental changes induced by stress. Degrades polypeptides processively to yield small peptide fragments that are 5 to 10 amino acids long. Binds to DNA in a double-stranded, site-specific manner. This chain is Lon protease, found in Campylobacter concisus (strain 13826).